The sequence spans 344 residues: NADH-quinone oxidoreductase subunit H 2 (344 aa).

Transmembrane regions (helical) follow at residues Leu13–Leu33, Ile82–Ile102, Ala116–Trp136, Met161–Val181, Phe188–Val208, Leu240–Phe260, Val280–Phe300, and Val319–Leu339.

It belongs to the complex I subunit 1 family. As to quaternary structure, NDH-1 is composed of 14 different subunits. Subunits NuoA, H, J, K, L, M, N constitute the membrane sector of the complex.

It localises to the cell inner membrane. The catalysed reaction is a quinone + NADH + 5 H(+)(in) = a quinol + NAD(+) + 4 H(+)(out). NDH-1 shuttles electrons from NADH, via FMN and iron-sulfur (Fe-S) centers, to quinones in the respiratory chain. The immediate electron acceptor for the enzyme in this species is believed to be ubiquinone. Couples the redox reaction to proton translocation (for every two electrons transferred, four hydrogen ions are translocated across the cytoplasmic membrane), and thus conserves the redox energy in a proton gradient. This subunit may bind ubiquinone. The chain is NADH-quinone oxidoreductase subunit H 2 from Nitrosococcus oceani (strain ATCC 19707 / BCRC 17464 / JCM 30415 / NCIMB 11848 / C-107).